The following is a 331-amino-acid chain: Oxygen-evolving enhancer protein 1-2, chloroplastic (331 aa).

The transit peptide at 1-57 (MATSLQAAATFLQPAKIAASPSRNVHLRSNQTVGKSFGLDSSQARLTCSLHSDLKDF) directs the protein to the chloroplast. A thylakoid-targeting transit peptide spans 58 to 84 (AGKCSDAAKIAGFALATSALVVSGAGA).

Belongs to the PsbO family.

The protein resides in the plastid. Its subcellular location is the chloroplast thylakoid membrane. In terms of biological role, stabilizes the manganese cluster which is the primary site of water splitting. Regulates dephosphorylation and turnover of the PSII reaction center D1 protein. The protein is Oxygen-evolving enhancer protein 1-2, chloroplastic (PSBO2) of Arabidopsis thaliana (Mouse-ear cress).